A 158-amino-acid chain; its full sequence is Succinate dehydrogenase [ubiquinone] cytochrome b small subunit B, mitochondrial (158 aa).

The transit peptide at 1–29 (MAALVRISSLCHRGVSPLLFRPSSLIRPL) directs the protein to the mitochondrion. Over 30-62 (AVQQKDHDCSYLISARIHATPSNYAGSGSKAAT) the chain is Mitochondrial matrix. A helical transmembrane segment spans residues 63–84 (MHWTGERILSIALLSLAPVAYF). The Mitochondrial intermembrane portion of the chain corresponds to 85–89 (CPSPA). Residues 90-110 (VDYSLAAALTLHGHWGLGQVV) traverse the membrane as a helical segment. Position 101 (H101) interacts with heme b. Residues 111-119 (TDYVHGDAK) lie on the Mitochondrial matrix side of the membrane. Y113 contributes to the a ubiquinone binding site. Residues 120-141 (IKMANAGLFVLSTVTFAGLCYF) traverse the membrane as a helical segment. The Mitochondrial intermembrane segment spans residues 142 to 158 (NYHDVGICKAVALLWSK).

It belongs to the CybS family. In terms of assembly, component of complex II composed of four subunits: the flavoprotein (FP) SDHA, iron-sulfur protein (IP) SDHB, and a cytochrome b560 composed of SDHC and SDHD.

It is found in the mitochondrion inner membrane. It participates in carbohydrate metabolism; tricarboxylic acid cycle. In terms of biological role, membrane-anchoring subunit of succinate dehydrogenase (SDH) that is involved in complex II of the mitochondrial electron transport chain and is responsible for transferring electrons from succinate to ubiquinone (coenzyme Q). SDH also oxidizes malate to the non-canonical enol form of oxaloacetate, enol-oxaloacetate. Enol-oxaloacetate, which is a potent inhibitor of the succinate dehydrogenase activity, is further isomerized into keto-oxaloacetate. The polypeptide is Succinate dehydrogenase [ubiquinone] cytochrome b small subunit B, mitochondrial (sdhdb) (Danio rerio (Zebrafish)).